A 516-amino-acid polypeptide reads, in one-letter code: Probable 2-isopropylmalate synthase (516 aa).

The 252-residue stretch at 20–271 folds into the Pyruvate carboxyltransferase domain; sequence VTVFDTTLRD…KTNIRTEYLV (252 aa).

The protein belongs to the alpha-IPM synthase/homocitrate synthase family.

The enzyme catalyses 3-methyl-2-oxobutanoate + acetyl-CoA + H2O = (2S)-2-isopropylmalate + CoA + H(+). Its pathway is amino-acid biosynthesis; L-leucine biosynthesis; L-leucine from 3-methyl-2-oxobutanoate: step 1/4. Functionally, catalyzes the condensation of the acetyl group of acetyl-CoA with 3-methyl-2-oxobutanoate (2-oxoisovalerate) to form 3-carboxy-3-hydroxy-4-methylpentanoate (2-isopropylmalate). In Methanosarcina mazei (strain ATCC BAA-159 / DSM 3647 / Goe1 / Go1 / JCM 11833 / OCM 88) (Methanosarcina frisia), this protein is Probable 2-isopropylmalate synthase (leuA).